The primary structure comprises 463 residues: Adenylosuccinate synthetase, chloroplastic (463 aa).

GTP is bound by residues 44-50 (GDEGKGK) and 72-74 (GHT). Asp45 (proton acceptor) is an active-site residue. Mg(2+) is bound by residues Asp45 and Gly72. Residues 45 to 48 (DEGK), 70 to 73 (NAGH), Thr164, Arg178, Asn256, Thr271, and Arg335 contribute to the IMP site. The active-site Proton donor is the His73. 331-337 (TTTGRPR) contacts substrate. GTP is bound by residues Arg337, 363 to 365 (KLD), and 446 to 448 (GVG).

Belongs to the adenylosuccinate synthetase family. As to quaternary structure, homodimer. Requires Mg(2+) as cofactor.

Its subcellular location is the plastid. It localises to the chloroplast. The catalysed reaction is IMP + L-aspartate + GTP = N(6)-(1,2-dicarboxyethyl)-AMP + GDP + phosphate + 2 H(+). It participates in purine metabolism; AMP biosynthesis via de novo pathway; AMP from IMP: step 1/2. In terms of biological role, plays an important role in the de novo pathway and in the salvage pathway of purine nucleotide biosynthesis. Catalyzes the first committed step in the biosynthesis of AMP from IMP. This Chlamydomonas reinhardtii (Chlamydomonas smithii) protein is Adenylosuccinate synthetase, chloroplastic.